Reading from the N-terminus, the 525-residue chain is G-protein regulator 2 (525 aa).

Positions 424–445 (PVDMMDLIFSMSSRMDDQRTEL) constitute a GoLoco domain. Residues 489 to 525 (TMNRILKRSKKSKSSLDSTNSIQGDDTRSDDVTMTSK) are disordered.

In terms of assembly, interacts with gpr-1; gpr-1 forms a complex with lin-5 and GDP-bound goa-1.

The protein resides in the cytoplasm. It localises to the cell cortex. Its subcellular location is the cytoskeleton. The protein localises to the spindle. Its function is as follows. In the 1-cell embryo, probably together with gpr-1, controls nuclear rotation and spindle elongation during mitosis. Complex of gpr-1 and gpr-2, in association with lin-5, activates G-protein signaling to affect mitotic spindle force. Polarity determinants (par genes) may regulate lin-5/gpr-1/gpr-2/goa-1 locally to create the asymmetric forces that drive spindle movement. The polypeptide is G-protein regulator 2 (gpr-2) (Caenorhabditis elegans).